The chain runs to 461 residues: tRNA modification GTPase MnmE (461 aa).

(6S)-5-formyl-5,6,7,8-tetrahydrofolate contacts are provided by Lys32, Glu89, and Lys128. Residues 224 to 387 (GHALSIVGKP…LSQKISAFFP (164 aa)) enclose the TrmE-type G domain. Asn234 provides a ligand contact to K(+). GTP-binding positions include 234 to 239 (NAGKSS), 253 to 259 (SDIKGTT), and 278 to 281 (DTAG). Mg(2+) is bound at residue Ser238. K(+) is bound by residues Ser253, Ile255, and Thr258. Residue Thr259 participates in Mg(2+) binding. Lys461 contacts (6S)-5-formyl-5,6,7,8-tetrahydrofolate.

Belongs to the TRAFAC class TrmE-Era-EngA-EngB-Septin-like GTPase superfamily. TrmE GTPase family. In terms of assembly, homodimer. Heterotetramer of two MnmE and two MnmG subunits. K(+) serves as cofactor.

It localises to the cytoplasm. Functionally, exhibits a very high intrinsic GTPase hydrolysis rate. Involved in the addition of a carboxymethylaminomethyl (cmnm) group at the wobble position (U34) of certain tRNAs, forming tRNA-cmnm(5)s(2)U34. The protein is tRNA modification GTPase MnmE of Helicobacter pylori (strain ATCC 700392 / 26695) (Campylobacter pylori).